The primary structure comprises 452 residues: ADP-dependent glucose/glucosamine kinase (452 aa).

The region spanning 1–452 (MSWDEMYRDA…AFVSEFSLSS (452 aa)) is the ADPK domain. Residues aspartate 33, glutamate 87, 111-112 (GQ), and histidine 174 contribute to the D-glucose site. Glutamate 264 provides a ligand contact to Mg(2+). Asparagine 290 is an ADP binding site. Residue glutamate 293 coordinates Mg(2+). Residues 339-340 (HT), valine 426, and glycine 436 contribute to the ADP site. Aspartate 437 contacts D-glucose. Aspartate 437 contacts Mg(2+). Catalysis depends on aspartate 437, which acts as the Proton acceptor.

Belongs to the ADP-dependent glucokinase family. Mg(2+) serves as cofactor.

It localises to the cytoplasm. The catalysed reaction is D-glucose + ADP = D-glucose 6-phosphate + AMP + H(+). It catalyses the reaction D-glucosamine + ADP = D-glucosamine 6-phosphate + AMP + H(+). It participates in carbohydrate degradation; glycolysis. Catalyzes the ADP-dependent phosphorylation of D-glucose to D-glucose 6-phosphate and glucosamine to glucosamine 6-phosphate. The sequence is that of ADP-dependent glucose/glucosamine kinase from Pyrococcus abyssi (strain GE5 / Orsay).